Consider the following 134-residue polypeptide: Small ribosomal subunit protein uS8c (134 aa).

The protein belongs to the universal ribosomal protein uS8 family. Part of the 30S ribosomal subunit.

The protein resides in the plastid. Functionally, one of the primary rRNA binding proteins, it binds directly to 16S rRNA central domain where it helps coordinate assembly of the platform of the 30S subunit. The chain is Small ribosomal subunit protein uS8c (rps8) from Cuscuta reflexa (Southern Asian dodder).